Here is a 184-residue protein sequence, read N- to C-terminus: Ribonuclease HII (184 aa).

In terms of domain architecture, RNase H type-2 spans 2-184 (AKICGIDEAG…KPKLAQSSLF (183 aa)). Residues Asp8, Glu9, and Asp95 each contribute to the a divalent metal cation site.

It belongs to the RNase HII family. It depends on Mn(2+) as a cofactor. The cofactor is Mg(2+).

The protein localises to the cytoplasm. The catalysed reaction is Endonucleolytic cleavage to 5'-phosphomonoester.. Endonuclease that specifically degrades the RNA of RNA-DNA hybrids. This chain is Ribonuclease HII, found in Campylobacter concisus (strain 13826).